The following is a 116-amino-acid chain: MKLTGLLSLALLTTLALAAPDPKKNGPNRDWCGQVCTGKNDCSGECNKCVNFVCKRTSVLIYKEYLHKNATDHAARLNATRHLTIMIDETTRVDHVTVKFNVETYGMESITRRPEA.

A signal peptide spans 1 to 18 (MKLTGLLSLALLTTLALA). Disulfide bonds link cysteine 32–cysteine 46, cysteine 36–cysteine 49, and cysteine 42–cysteine 54.

It belongs to the UPF0499 family.

It is found in the secreted. The polypeptide is UPF0499 protein ATEG_06693 (Aspergillus terreus (strain NIH 2624 / FGSC A1156)).